The chain runs to 232 residues: Expansin-YoaJ (232 aa).

Positions 1 to 25 (MKKIMSAFVGMVLLTIFCFSPQASA) are cleaved as a signal peptide. The region spanning 58–127 (ITAINPADLN…MKDGKINIKW (70 aa)) is the Expansin-like EG45 domain.

Its subcellular location is the secreted. It localises to the cell wall. In terms of biological role, may promote colonization of plant roots. May cause loosening and extension of plant cell walls by disrupting non-covalent bonding between cellulose microfibrils and matrix glucans. Has very low expansin activity (in vitro). No enzymatic activity has been found. Binds to peptidoglycan and to plant cell walls. The sequence is that of Expansin-YoaJ (yoaJ) from Bacillus subtilis (strain 168).